A 121-amino-acid chain; its full sequence is Probable K(+)/H(+) antiporter subunit G (121 aa).

3 helical membrane passes run 10 to 32, 45 to 67, and 72 to 94; these read WAALLVCGLMLVGAATTLIGSLG, APTIATSGGTILLCLASILCFAV, and WVFHEVLIIFFVTVTTPVTLMLL.

It belongs to the CPA3 antiporters (TC 2.A.63) subunit G family. May form a hetero-oligomeric complex that consists of six subunits: PhaAB, PhaC, PhaD, PhaE, PhaF and PhaG.

It localises to the cell membrane. Its function is as follows. Part of a K(+) efflux system which is required for the adaptation of R.meliloti to alkaline pH as well as for the infection process during symbiotic nodule development. The chain is Probable K(+)/H(+) antiporter subunit G (phaG) from Rhizobium meliloti (strain 1021) (Ensifer meliloti).